Reading from the N-terminus, the 125-residue chain is Oxytocin-neurophysin 1 (125 aa).

The first 19 residues, 1–19, serve as a signal peptide directing secretion; the sequence is MACPSLACCLLGLLALTSA. Cysteine 20 and cysteine 25 are oxidised to a cystine. Residue glycine 28 is modified to Glycine amide. 7 disulfide bridges follow: cysteine 41-cysteine 85, cysteine 44-cysteine 58, cysteine 52-cysteine 75, cysteine 59-cysteine 65, cysteine 92-cysteine 104, cysteine 98-cysteine 116, and cysteine 105-cysteine 110.

Belongs to the vasopressin/oxytocin family. Interacts with oxytocin receptor (Ki=1.5 nM). Interacts with vasopressin V1aR/AVPR1A (Ki=37 nM), V1bR/AVPR1B (Ki=222 nM), and V2R/AVPR2 receptors (Ki=823 nM).

Functionally, neurophysin 1 specifically binds oxytocin. In terms of biological role, oxytocin causes contraction of the smooth muscle of the uterus and of the mammary gland. Acts by binding to oxytocin receptor (OXTR). The chain is Oxytocin-neurophysin 1 (Oxt) from Rattus norvegicus (Rat).